A 176-amino-acid chain; its full sequence is NAD(P)H-quinone oxidoreductase subunit 6, chloroplastic (176 aa).

5 helical membrane-spanning segments follow: residues 10 to 30 (FLLVFLGSGLILGSLGVVLLT), 32 to 52 (PIFSAFSLGLVLVCISLFYIL), 63 to 83 (LLIYVGAINILIIFAVMFMNS), 92 to 112 (LWTVGDGITLIVCTSIFVSLV), and 152 to 172 (FFLPFELISIILLVALIGTIV).

It belongs to the complex I subunit 6 family. In terms of assembly, NDH is composed of at least 16 different subunits, 5 of which are encoded in the nucleus.

The protein resides in the plastid. The protein localises to the chloroplast thylakoid membrane. It carries out the reaction a plastoquinone + NADH + (n+1) H(+)(in) = a plastoquinol + NAD(+) + n H(+)(out). The catalysed reaction is a plastoquinone + NADPH + (n+1) H(+)(in) = a plastoquinol + NADP(+) + n H(+)(out). NDH shuttles electrons from NAD(P)H:plastoquinone, via FMN and iron-sulfur (Fe-S) centers, to quinones in the photosynthetic chain and possibly in a chloroplast respiratory chain. The immediate electron acceptor for the enzyme in this species is believed to be plastoquinone. Couples the redox reaction to proton translocation, and thus conserves the redox energy in a proton gradient. The chain is NAD(P)H-quinone oxidoreductase subunit 6, chloroplastic (ndhG) from Cicer arietinum (Chickpea).